The chain runs to 492 residues: MTAHFPFDNSYVALPPNFFARVAPTPVAAPRLIKLNRPLAVQLGLDPDLLETPEGAEILSGNQMPETAASIAMAYAGHQFGNFVPQLGDGRAILLGEVVDRNGVRRDIQLKGAGRTPFSRMGDGRAALGPVLREYIVSEAMAALGIPTTRSLAAVLTGETVLRDPIQPGAVLTRVASSHIRVGTFQYFAARGDLASVRALADHAIARHYPEAAQAPSPYLALLEGVIGRQAELVASWMMVGFIHGVMNTDNCSVAGETIDYGPCAFMDTFDPKTVYSSIDQFGRYAYGNQPPIALWNLTRLAECLVRLLADDDDKGIEIAQTALGGFAERFNAAYLAKLAAKLGLFTSQPDDQQLSQEFLTALAKGEADFTLAFRRLSDAAVDPSDLGEVRALFADPAAFDEWAPRWRARIAAEPQDATTRQAAMRRVNPAYTPRNHRIEAVIRAAVDRDDFAPFEEILTVLANPFEEKAEFARYAEPPQPHEEVLETFCGT.

ATP is bound by residues Gly-88, Gly-90, Arg-91, Lys-111, Asp-123, Gly-124, Arg-174, and Arg-181. Asp-250 acts as the Proton acceptor in catalysis. Positions 251 and 260 each coordinate Mg(2+). Asp-260 lines the ATP pocket.

The protein belongs to the SELO family. It depends on Mg(2+) as a cofactor. Mn(2+) serves as cofactor.

The enzyme catalyses L-seryl-[protein] + ATP = 3-O-(5'-adenylyl)-L-seryl-[protein] + diphosphate. It catalyses the reaction L-threonyl-[protein] + ATP = 3-O-(5'-adenylyl)-L-threonyl-[protein] + diphosphate. It carries out the reaction L-tyrosyl-[protein] + ATP = O-(5'-adenylyl)-L-tyrosyl-[protein] + diphosphate. The catalysed reaction is L-histidyl-[protein] + UTP = N(tele)-(5'-uridylyl)-L-histidyl-[protein] + diphosphate. The enzyme catalyses L-seryl-[protein] + UTP = O-(5'-uridylyl)-L-seryl-[protein] + diphosphate. It catalyses the reaction L-tyrosyl-[protein] + UTP = O-(5'-uridylyl)-L-tyrosyl-[protein] + diphosphate. In terms of biological role, nucleotidyltransferase involved in the post-translational modification of proteins. It can catalyze the addition of adenosine monophosphate (AMP) or uridine monophosphate (UMP) to a protein, resulting in modifications known as AMPylation and UMPylation. This chain is Protein nucleotidyltransferase YdiU, found in Rhodopseudomonas palustris (strain TIE-1).